Consider the following 1234-residue polypeptide: Transcription-repair-coupling factor (1234 aa).

The region spanning 663-824 (DMEKPIPMDR…LAGIREMSTI (162 aa)) is the Helicase ATP-binding domain. 676–683 (GDVGYGKT) provides a ligand contact to ATP. The DEEQ box motif lies at 777 to 780 (DEEQ). One can recognise a Helicase C-terminal domain in the interval 842–999 (DDKQIAAALR…GMAVALKDLE (158 aa)). The interval 1207-1234 (RQHIGITNPSPPGEDGRGRNTTIKERQP) is disordered. Residues 1220–1234 (EDGRGRNTTIKERQP) show a composition bias toward basic and acidic residues.

In the N-terminal section; belongs to the UvrB family. This sequence in the C-terminal section; belongs to the helicase family. RecG subfamily.

Its subcellular location is the cytoplasm. Couples transcription and DNA repair by recognizing RNA polymerase (RNAP) stalled at DNA lesions. Mediates ATP-dependent release of RNAP and its truncated transcript from the DNA, and recruitment of nucleotide excision repair machinery to the damaged site. In Mycobacterium bovis (strain ATCC BAA-935 / AF2122/97), this protein is Transcription-repair-coupling factor.